The sequence spans 329 residues: GTP 3',8-cyclase (329 aa).

The 227-residue stretch at 8 to 234 folds into the Radical SAM core domain; it reads AFARKFYYLR…QLRQRSDGPA (227 aa). A GTP-binding site is contributed by Arg-17. Positions 24 and 28 each coordinate [4Fe-4S] cluster. S-adenosyl-L-methionine is bound at residue Tyr-30. [4Fe-4S] cluster is bound at residue Cys-31. GTP is bound at residue Arg-68. Gly-72 provides a ligand contact to S-adenosyl-L-methionine. Residue Thr-99 coordinates GTP. Residue Ser-123 coordinates S-adenosyl-L-methionine. Lys-160 lines the GTP pocket. Residue Met-194 coordinates S-adenosyl-L-methionine. [4Fe-4S] cluster contacts are provided by Cys-257 and Cys-260. GTP is bound at residue 262–264; sequence RLR. Cys-274 serves as a coordination point for [4Fe-4S] cluster.

It belongs to the radical SAM superfamily. MoaA family. As to quaternary structure, monomer and homodimer. It depends on [4Fe-4S] cluster as a cofactor.

The catalysed reaction is GTP + AH2 + S-adenosyl-L-methionine = (8S)-3',8-cyclo-7,8-dihydroguanosine 5'-triphosphate + 5'-deoxyadenosine + L-methionine + A + H(+). The protein operates within cofactor biosynthesis; molybdopterin biosynthesis. Catalyzes the cyclization of GTP to (8S)-3',8-cyclo-7,8-dihydroguanosine 5'-triphosphate. The protein is GTP 3',8-cyclase of Escherichia coli O7:K1 (strain IAI39 / ExPEC).